Reading from the N-terminus, the 351-residue chain is Histidinol-phosphate aminotransferase (351 aa).

Lys-221 is subject to N6-(pyridoxal phosphate)lysine.

This sequence belongs to the class-II pyridoxal-phosphate-dependent aminotransferase family. Histidinol-phosphate aminotransferase subfamily. Homodimer. Requires pyridoxal 5'-phosphate as cofactor.

It carries out the reaction L-histidinol phosphate + 2-oxoglutarate = 3-(imidazol-4-yl)-2-oxopropyl phosphate + L-glutamate. It functions in the pathway amino-acid biosynthesis; L-histidine biosynthesis; L-histidine from 5-phospho-alpha-D-ribose 1-diphosphate: step 7/9. The chain is Histidinol-phosphate aminotransferase from Staphylococcus epidermidis (strain ATCC 12228 / FDA PCI 1200).